Consider the following 429-residue polypeptide: Putative F-box/kelch-repeat protein At2g21680 (429 aa).

Positions 1–32 (MVLISETSDDGSTGGDHQIKKPKKEEDRNKKL) are disordered. Over residues 17-29 (HQIKKPKKEEDRN) the composition is skewed to basic and acidic residues. The F-box domain maps to 37 to 84 (QVSLPIPEELILRCFLLVRRCHHPSLSLVCRSFHSLMSKLYDDRLRLG). Kelch repeat units follow at residues 144-175 (DIYVIGGRVGEKLLEDVGVGYNKPISGGRRGE), 176-221 (TSIR…VIDG), 222-267 (KIYV…LTYA), 269-313 (MKEK…VVDN), and 315-359 (LFCI…DGYK).

This chain is Putative F-box/kelch-repeat protein At2g21680, found in Arabidopsis thaliana (Mouse-ear cress).